The sequence spans 102 residues: Large ribosomal subunit protein bL28 (102 aa).

The protein belongs to the bacterial ribosomal protein bL28 family.

The chain is Large ribosomal subunit protein bL28 from Bradyrhizobium diazoefficiens (strain JCM 10833 / BCRC 13528 / IAM 13628 / NBRC 14792 / USDA 110).